A 594-amino-acid polypeptide reads, in one-letter code: Protein HOTHEAD (594 aa).

The N-terminal stretch at 1-19 (MALKLFLFALLLCLPTSLS) is a signal peptide. An FAD-binding site is contributed by 64–91 (DYIVIGGGTAGCPLAATLSQNFSVLVLE). Histidine 529 serves as the catalytic Proton acceptor.

The protein belongs to the GMC oxidoreductase family. The cofactor is FAD. Expressed in roots, leaves, stems, inflorescences and siliques. Found not only in epidermis but also in all sub-epidermal cell layers.

In terms of biological role, probable FAD-dependent enzyme. Involved in regulating post-genital organ fusion. Required to limit cellular interactions between contacting epidermal cells during floral development. The protein is Protein HOTHEAD (HTH) of Arabidopsis thaliana (Mouse-ear cress).